Here is a 662-residue protein sequence, read N- to C-terminus: UvrABC system protein B (662 aa).

The 158-residue stretch at 31–188 folds into the Helicase ATP-binding domain; the sequence is DNIEGGEKAQ…NDLVDIQFER (158 aa). 44–51 is an ATP binding site; that stretch reads GATGTGKT. The Beta-hairpin signature appears at 97 to 120; it reads YYDYYQPEAYVPSSDTYIEKDSSV. Positions 435 to 601 constitute a Helicase C-terminal domain; it reads QIDDLLGEIN…TIKKEIRDLI (167 aa). Residues 626-661 form the UVR domain; that stretch reads KELVKKLEKQMQEAVEVLDFELAAQIRDMMLEVKAL.

Belongs to the UvrB family. Forms a heterotetramer with UvrA during the search for lesions. Interacts with UvrC in an incision complex.

The protein localises to the cytoplasm. Functionally, the UvrABC repair system catalyzes the recognition and processing of DNA lesions. A damage recognition complex composed of 2 UvrA and 2 UvrB subunits scans DNA for abnormalities. Upon binding of the UvrA(2)B(2) complex to a putative damaged site, the DNA wraps around one UvrB monomer. DNA wrap is dependent on ATP binding by UvrB and probably causes local melting of the DNA helix, facilitating insertion of UvrB beta-hairpin between the DNA strands. Then UvrB probes one DNA strand for the presence of a lesion. If a lesion is found the UvrA subunits dissociate and the UvrB-DNA preincision complex is formed. This complex is subsequently bound by UvrC and the second UvrB is released. If no lesion is found, the DNA wraps around the other UvrB subunit that will check the other stand for damage. The chain is UvrABC system protein B from Streptococcus pneumoniae (strain Hungary19A-6).